Here is a 1134-residue protein sequence, read N- to C-terminus: Ankyrin repeat and SAM domain-containing protein 1A (1134 aa).

An N-acetylglycine modification is found at glycine 2. Residues 33 to 55 (GGGGGGGSGGGGGGSGGGGGGLG) show a composition bias toward gly residues. The interval 33–57 (GGGGGGGSGGGGGGSGGGGGGLGSS) is disordered. 6 ANK repeats span residues 79–108 (TGYTPLHHAALNGHKDVVEVLLRNDALTNV), 112–141 (KGCYPLHLAAWKGDAQIVRLLIHQGPSHTR), 148–177 (DNETALHCAAQYGHTEVVKVLLEELTDPTM), 181–210 (KFETPLDLAALYGRLEVVKMLLNAHPNLLS), 214–243 (KKHTPLHLAARNGHKAVVQVLLDAGMDSNY), and 246–275 (EMGSALHEAALFGKTDVVQILLAAGTDVNI). Residues 305–317 (HMTGKRSTKEVDK) are compositionally biased toward basic and acidic residues. 3 disordered regions span residues 305 to 338 (HMTGKRSTKEVDKTPPPQPPLISSMDSISQKSQG), 375 to 422 (SMAS…EEDH), and 469 to 498 (VDGKTKDHRRSSSSRSQDSAEGQDGQVPEQ). Residue threonine 318 is modified to Phosphothreonine. Over residues 328–337 (SMDSISQKSQ) the composition is skewed to polar residues. A compositionally biased stretch (basic and acidic residues) spans 382 to 392 (SDQDSTNKEAE). Serine 507 carries the phosphoserine modification. The disordered stretch occupies residues 569–650 (LTGLPTTNSR…MGSRSESLSN (82 aa)). The segment covering 572–588 (LPTTNSRSHPETLTHTA) has biased composition (polar residues). Residues 613-628 (PKAELKLSRSLSKSDS) are compositionally biased toward basic and acidic residues. Phosphoserine is present on residues serine 620, serine 622, serine 624, serine 626, serine 628, serine 647, serine 661, serine 663, serine 666, and serine 677. Polar residues predominate over residues 633–650 (CSPTEDATMGSRSESLSN). SAM domains are found at residues 696–762 (TLEQ…LPKV) and 770–837 (NSPP…YEEP). Residues 856 to 868 (TSSPLSQNDSCTG) show a composition bias toward polar residues. 2 disordered regions span residues 856-896 (TSSP…APSR) and 1079-1134 (AEMI…LSTN). At serine 887 the chain carries Phosphoserine. The PID domain occupies 936–1091 (IFESCGYEAN…IETKSSKPVP (156 aa)). Basic and acidic residues predominate over residues 1123 to 1134 (PKPDSKRSLSTN).

Interacts (via SAM domain) with EPHA2 (via SAM domain). Interacts with EPHA8; EPHA8 kinase activity-independent but stimulated by EPHA8 ubiquitination. Interacts (via SAM domain) with EPHA6 (via SAM domain). Phosphorylated on tyrosine residues in response to EGF and PDGF. As to expression, widely expressed (at protein level).

It localises to the cytoplasm. Its subcellular location is the cell projection. Functionally, regulator of different signaling pathways. Regulates EPHA8 receptor tyrosine kinase signaling to control cell migration and neurite retraction. This Homo sapiens (Human) protein is Ankyrin repeat and SAM domain-containing protein 1A (ANKS1A).